Here is an 89-residue protein sequence, read N- to C-terminus: MAHKKGASSSRNGRDSNAQRLGVKRFGGQFVKAGEIIVRQRGTHFHPGELVGRGKDDTLFALSAGHVQFGHRRGRRVVNVVEQVAAPAA.

The tract at residues 1 to 21 is disordered; sequence MAHKKGASSSRNGRDSNAQRL. The segment covering 7–19 has biased composition (polar residues); it reads ASSSRNGRDSNAQ.

The protein belongs to the bacterial ribosomal protein bL27 family.

The sequence is that of Large ribosomal subunit protein bL27 from Frankia alni (strain DSM 45986 / CECT 9034 / ACN14a).